A 363-amino-acid polypeptide reads, in one-letter code: LIM and cysteine-rich domains protein 1 (363 aa).

The residue at position 16 (Ser16) is a Phosphoserine. The region spanning 99–206 (MIMTNPIATG…GEVALPGQGG (108 aa)) is the PET domain. The tract at residues 200-233 (ALPGQGGLPKEEGKQQEKPEGAETAAPTANGSLG) is disordered. Basic and acidic residues predominate over residues 208-220 (PKEEGKQQEKPEG). 2 LIM zinc-binding domains span residues 239 to 304 (YVCE…SLRP) and 305 to 363 (RCSG…SKRT).

In terms of assembly, interacts with beta-dystroglycan. Interacts with GATA1, GATA4 and GATA6. In terms of tissue distribution, highly expressed in both skeletal muscle and cardiac muscle.

Its subcellular location is the cytoplasm. The protein localises to the nucleus. In terms of biological role, transcriptional cofactor that restricts GATA6 function by inhibiting DNA-binding, resulting in repression of GATA6 transcriptional activation of downstream target genes. Represses GATA6-mediated trans activation of lung- and cardiac tissue-specific promoters. Inhibits DNA-binding by GATA4 and GATA1 to the cTNC promoter. Plays a critical role in the development of cardiac hypertrophy via activation of calcineurin/nuclear factor of activated T-cells signaling pathway. This Sus scrofa (Pig) protein is LIM and cysteine-rich domains protein 1 (LMCD1).